We begin with the raw amino-acid sequence, 238 residues long: Ribonuclease PH (238 aa).

Residues R86 and 124–126 each bind phosphate; that span reads GTR.

Belongs to the RNase PH family. Homohexameric ring arranged as a trimer of dimers.

The catalysed reaction is tRNA(n+1) + phosphate = tRNA(n) + a ribonucleoside 5'-diphosphate. Its function is as follows. Phosphorolytic 3'-5' exoribonuclease that plays an important role in tRNA 3'-end maturation. Removes nucleotide residues following the 3'-CCA terminus of tRNAs; can also add nucleotides to the ends of RNA molecules by using nucleoside diphosphates as substrates, but this may not be physiologically important. Probably plays a role in initiation of 16S rRNA degradation (leading to ribosome degradation) during starvation. The protein is Ribonuclease PH of Nitrosospira multiformis (strain ATCC 25196 / NCIMB 11849 / C 71).